The following is a 449-amino-acid chain: Methionine aminopeptidase 2-2 (449 aa).

The tract at residues 1–91 (MAAQAAPELA…PRIPLTTLFP (91 aa)) is disordered. Over residues 15-28 (NKNTGSAEASTVPA) the composition is skewed to polar residues. The segment covering 34-50 (DDAENEGDSDDDRDDEQ) has biased composition (acidic residues). Over residues 61-75 (KKKKKKRPKKKKKTA) the composition is skewed to basic residues. Residue His-199 coordinates substrate. Residues Asp-219, Asp-230, and His-299 each contribute to the a divalent metal cation site. His-307 provides a ligand contact to substrate. A divalent metal cation-binding residues include Glu-335 and Glu-430.

This sequence belongs to the peptidase M24A family. Methionine aminopeptidase eukaryotic type 2 subfamily. Co(2+) is required as a cofactor. It depends on Zn(2+) as a cofactor. The cofactor is Mn(2+). Fe(2+) serves as cofactor.

The protein localises to the cytoplasm. It catalyses the reaction Release of N-terminal amino acids, preferentially methionine, from peptides and arylamides.. In terms of biological role, cotranslationally removes the N-terminal methionine from nascent proteins. The N-terminal methionine is often cleaved when the second residue in the primary sequence is small and uncharged (Met-Ala-, Cys, Gly, Pro, Ser, Thr, or Val). The sequence is that of Methionine aminopeptidase 2-2 from Arthroderma gypseum (strain ATCC MYA-4604 / CBS 118893) (Microsporum gypseum).